Here is a 210-residue protein sequence, read N- to C-terminus: Peptidyl-tRNA hydrolase (210 aa).

Residue Y14 participates in tRNA binding. The active-site Proton acceptor is H19. Positions 64, 66, and 112 each coordinate tRNA.

This sequence belongs to the PTH family. As to quaternary structure, monomer.

The protein localises to the cytoplasm. It carries out the reaction an N-acyl-L-alpha-aminoacyl-tRNA + H2O = an N-acyl-L-amino acid + a tRNA + H(+). Its function is as follows. Hydrolyzes ribosome-free peptidyl-tRNAs (with 1 or more amino acids incorporated), which drop off the ribosome during protein synthesis, or as a result of ribosome stalling. In terms of biological role, catalyzes the release of premature peptidyl moieties from peptidyl-tRNA molecules trapped in stalled 50S ribosomal subunits, and thus maintains levels of free tRNAs and 50S ribosomes. In Methylorubrum extorquens (strain CM4 / NCIMB 13688) (Methylobacterium extorquens), this protein is Peptidyl-tRNA hydrolase.